The following is a 137-amino-acid chain: Fluoride-specific ion channel FluC 1 (137 aa).

4 helical membrane passes run 4–24 (LIYI…YYLG), 37–57 (LATL…TTYI), 67–87 (VITG…TFSV), and 100–120 (IAFL…GLGY). Na(+) contacts are provided by glycine 77 and threonine 80.

It belongs to the fluoride channel Fluc/FEX (TC 1.A.43) family.

The protein resides in the cell membrane. It catalyses the reaction fluoride(in) = fluoride(out). Its activity is regulated as follows. Na(+) is not transported, but it plays an essential structural role and its presence is essential for fluoride channel function. Fluoride-specific ion channel. Important for reducing fluoride concentration in the cell, thus reducing its toxicity. The sequence is that of Fluoride-specific ion channel FluC 1 from Bacillus thuringiensis subsp. konkukian (strain 97-27).